Consider the following 96-residue polypeptide: Plasminogen-like protein A (96 aa).

Residues 1 to 19 form the signal peptide; sequence MEHKEVVLLLLLFLKSGQG. One can recognise a PAN domain in the interval 20-96; sequence EPLDDYVNAQ…RMRDVVLFEK (77 aa). Intrachain disulfides connect cysteine 49-cysteine 73 and cysteine 53-cysteine 61.

In terms of tissue distribution, expressed in liver.

The protein resides in the secreted. In terms of biological role, may bind non-covalently to lysine binding sites present in the kringle structures of plasminogen. This may interfere with the binding of fibrin or alpha-2-antiplasmin to plasminogen and may result in the localization of activity at sites necessary for extracellular matrix destruction. The protein is Plasminogen-like protein A (PLGLA) of Homo sapiens (Human).